The sequence spans 674 residues: DNA ligase (674 aa).

NAD(+)-binding positions include 34–38, 83–84, and glutamate 117; these read DFEFD and SL. Residue lysine 119 is the N6-AMP-lysine intermediate of the active site. Residues arginine 140, glutamate 184, lysine 297, and lysine 321 each coordinate NAD(+). Residues cysteine 415, cysteine 418, cysteine 433, and cysteine 439 each contribute to the Zn(2+) site. Positions 598 to 674 constitute a BRCT domain; sequence LVNNNFEGQS…IDEDEFERML (77 aa).

Belongs to the NAD-dependent DNA ligase family. LigA subfamily. Mg(2+) serves as cofactor. It depends on Mn(2+) as a cofactor.

The catalysed reaction is NAD(+) + (deoxyribonucleotide)n-3'-hydroxyl + 5'-phospho-(deoxyribonucleotide)m = (deoxyribonucleotide)n+m + AMP + beta-nicotinamide D-nucleotide.. DNA ligase that catalyzes the formation of phosphodiester linkages between 5'-phosphoryl and 3'-hydroxyl groups in double-stranded DNA using NAD as a coenzyme and as the energy source for the reaction. It is essential for DNA replication and repair of damaged DNA. The polypeptide is DNA ligase (Chlorobaculum tepidum (strain ATCC 49652 / DSM 12025 / NBRC 103806 / TLS) (Chlorobium tepidum)).